A 73-amino-acid chain; its full sequence is Small proline-rich protein 2G (73 aa).

The segment covering 1-11 (MSYQQQQCKQP) has biased composition (low complexity). A disordered region spans residues 1–20 (MSYQQQQCKQPCQPPPVCPT). Repeat copies occupy residues 21–29 (PKCPEPCPP), 30–38 (PKCPEPYLP), and 39–47 (PPCPPEHCP). Positions 21–47 (PKCPEPCPPPKCPEPYLPPPCPPEHCP) are 3 X 9 AA approximate tandem repeats.

Belongs to the cornifin (SPRR) family.

The protein resides in the cytoplasm. Functionally, cross-linked envelope protein of keratinocytes. It is a keratinocyte protein that first appears in the cell cytosol, but ultimately becomes cross-linked to membrane proteins by transglutaminase. All that results in the formation of an insoluble envelope beneath the plasma membrane. This is Small proline-rich protein 2G (SPRR2G) from Homo sapiens (Human).